The following is a 250-amino-acid chain: DNA repair protein RecO (250 aa).

It belongs to the RecO family.

In terms of biological role, involved in DNA repair and RecF pathway recombination. The sequence is that of DNA repair protein RecO from Thermodesulfovibrio yellowstonii (strain ATCC 51303 / DSM 11347 / YP87).